The primary structure comprises 182 residues: Transcription termination/antitermination protein NusG (182 aa).

The region spanning 130-161 (VGEVVRVNEGPFADFNGTVEEVDYEKSRLKVS) is the KOW domain.

It belongs to the NusG family.

In terms of biological role, participates in transcription elongation, termination and antitermination. This chain is Transcription termination/antitermination protein NusG, found in Vibrio vulnificus (strain CMCP6).